The chain runs to 443 residues: Zinc finger CCCH domain-containing protein 63 (443 aa).

Disordered stretches follow at residues 1 to 29 (MDFD…MAPT) and 56 to 99 (LPGP…SSSW). 2 C3H1-type zinc fingers span residues 30–56 (DTRQ…HREL) and 109–136 (TKTE…HCWS). 6 WD repeats span residues 149–190 (GHEK…GVLK), 228–265 (GPVG…NCFE), 272–311 (GHTL…QTLT), 313–349 (HSSV…NLEV), 354–396 (KEEH…LFIR), and 404–442 (FAKQ…TAAL).

The protein is Zinc finger CCCH domain-containing protein 63 (ZFWD2) of Arabidopsis thaliana (Mouse-ear cress).